A 232-amino-acid chain; its full sequence is Translation initiation factor IF-3 (232 aa).

2 disordered regions span residues Met1 to Arg21 and Leu184 to Arg232. Positions Ala193 to Pro208 are enriched in low complexity. The segment covering Ala209–Ala222 has biased composition (pro residues). Residues Pro223–Arg232 show a composition bias toward low complexity.

The protein belongs to the IF-3 family. In terms of assembly, monomer.

Its subcellular location is the cytoplasm. IF-3 binds to the 30S ribosomal subunit and shifts the equilibrium between 70S ribosomes and their 50S and 30S subunits in favor of the free subunits, thus enhancing the availability of 30S subunits on which protein synthesis initiation begins. The chain is Translation initiation factor IF-3 from Anaeromyxobacter sp. (strain K).